The primary structure comprises 88 residues: Apolipoprotein C-I (88 aa).

The signal sequence occupies residues 1 to 26 (MRLILSLPVLVVVLSMVLEGPAPAQA).

The protein belongs to the apolipoprotein C1 family. As to expression, expressed in the liver.

It localises to the secreted. In terms of biological role, inhibitor of lipoprotein binding to the low density lipoprotein (LDL) receptor, LDL receptor-related protein, and very low density lipoprotein (VLDL) receptor. Associates with high density lipoproteins (HDL) and the triacylglycerol-rich lipoproteins in the plasma and makes up about 10% of the protein of the VLDL and 2% of that of HDL. Appears to interfere directly with fatty acid uptake and is also the major plasma inhibitor of cholesteryl ester transfer protein (CETP). Binds free fatty acids and reduces their intracellular esterification. Modulates the interaction of APOE with beta-migrating VLDL and inhibits binding of beta-VLDL to the LDL receptor-related protein. The polypeptide is Apolipoprotein C-I (APOC1) (Canis lupus familiaris (Dog)).